A 451-amino-acid chain; its full sequence is Chromosomal replication initiator protein DnaA (451 aa).

The interval 1–72 (MQSIEDIWQE…ANILQEITGR (72 aa)) is domain I, interacts with DnaA modulators. The segment at 72 to 108 (RLFDVRFIDGEQEENFEYTVIKPNPALDEDGIEIGKH) is domain II. The segment at 109 to 325 (MLNPRYVFDT…GALIRVVAYS (217 aa)) is domain III, AAA+ region. Residues glycine 153, glycine 155, lysine 156, and threonine 157 each contribute to the ATP site. The domain IV, binds dsDNA stretch occupies residues 326 to 451 (SLVNKDITAG…KNLRKSQNMF (126 aa)).

The protein belongs to the DnaA family. Oligomerizes as a right-handed, spiral filament on DNA at oriC.

It localises to the cytoplasm. In terms of biological role, plays an essential role in the initiation and regulation of chromosomal replication. ATP-DnaA binds to the origin of replication (oriC) to initiate formation of the DNA replication initiation complex once per cell cycle. Binds the DnaA box (a 9 base pair repeat at the origin) and separates the double-stranded (ds)DNA. Forms a right-handed helical filament on oriC DNA; dsDNA binds to the exterior of the filament while single-stranded (ss)DNA is stabiized in the filament's interior. The ATP-DnaA-oriC complex binds and stabilizes one strand of the AT-rich DNA unwinding element (DUE), permitting loading of DNA polymerase. After initiation quickly degrades to an ADP-DnaA complex that is not apt for DNA replication. Binds acidic phospholipids. The protein is Chromosomal replication initiator protein DnaA of Listeria welshimeri serovar 6b (strain ATCC 35897 / DSM 20650 / CCUG 15529 / CIP 8149 / NCTC 11857 / SLCC 5334 / V8).